A 325-amino-acid polypeptide reads, in one-letter code: Dehydrogenase/reductase SDR family member 7B (325 aa).

Topologically, residues 1–17 are cytoplasmic; the sequence is MVSAATRKSLLRARVMD. Residues 18-38 traverse the membrane as a helical; Signal-anchor for type II membrane protein segment; that stretch reads FITSTAILPLLLGCVGLFSLF. Residues 39–325 are Lumenal-facing; it reads KLLQWLRMRA…ARKERKSKHS (287 aa). 2 residues coordinate NAD(+): S62 and L64. S194 is a substrate binding site. Residues Y207, K211, and T242 each coordinate NAD(+). Catalysis depends on Y207, which acts as the Proton acceptor.

It belongs to the short-chain dehydrogenases/reductases (SDR) family.

It localises to the endoplasmic reticulum membrane. Functionally, putative oxidoreductase. The polypeptide is Dehydrogenase/reductase SDR family member 7B (DHRS7B) (Bos taurus (Bovine)).